The chain runs to 443 residues: Nuclear hormone receptor family member nhr-60 (443 aa).

Residues 1 to 20 are compositionally biased toward low complexity; that stretch reads MIQSSSSISQDSLDLPSILS. The disordered stretch occupies residues 1–40; that stretch reads MIQSSSSISQDSLDLPSILSTFSADEPEDEPSPTAVKSTK. The nuclear receptor DNA-binding region spans 44–121; that stretch reads PTECLICGNS…VGMNPLAMEV (78 aa). 2 NR C4-type zinc fingers span residues 47–67 and 83–104; these read CLIC…CNGC and CKAK…CRAC. One can recognise an NR LBD domain in the interval 196 to 439; sequence NEFSGLEYLL…KDLVMRVIED (244 aa). Positions 225–249 are disordered; sequence LRRDQLGPPRLPKPPSPGKPRDSQH. A compositionally biased stretch (pro residues) spans 233 to 242; it reads PRLPKPPSPG.

The protein belongs to the nuclear hormone receptor family.

It localises to the nucleus. Its function is as follows. Orphan nuclear receptor (Potential). Required for embryonic and larval morphogenesis and probably for seam cell positioning and migration. This is Nuclear hormone receptor family member nhr-60 from Caenorhabditis elegans.